The following is a 77-amino-acid chain: Metallothionein-like protein type 2 (77 aa).

This sequence belongs to the metallothionein superfamily. Type 15 family. In terms of tissue distribution, expressed in the left, stem and flower, at very low levels in roots and is not detectable in mesophyll protoplasts.

Functionally, metallothioneins have a high content of cysteine residues that bind various heavy metals. The sequence is that of Metallothionein-like protein type 2 (MTI) from Vicia faba (Broad bean).